Reading from the N-terminus, the 794-residue chain is Zinc finger and BTB domain-containing protein 17 (794 aa).

Residues 1–104 (MDFPQHSQRV…VASFLQMQDI (104 aa)) form the BTB domain. Residues 116–285 (EPSSTTGESA…QNLRSGTYGD (170 aa)) form a disordered region. The segment covering 132 to 142 (GGDKRAKDEKA) has biased composition (basic and acidic residues). A compositionally biased stretch (low complexity) spans 203-216 (SSMAAAEAEALSES). Positions 243 to 252 (VKEEGMHLDN) are enriched in basic and acidic residues. The segment covering 254-263 (EPPEENEESA) has biased composition (acidic residues). The segment at 260-299 (EESAGTDSGQELGMEGQNLRSGTYGDRTESKAYGSIIHKC) is interaction with MYC. C2H2-type zinc fingers lie at residues 297 to 319 (HKCE…IRIH), 325 to 347 (FSCR…EKTH), 353 to 375 (YGCE…KKRH), 381 to 403 (YRCG…QLVH), 409 to 431 (YQCD…LETH), 437 to 459 (HKCP…LKIH), 465 to 487 (LKCR…LRIH), 493 to 515 (YVCT…VRIH), 519 to 543 (KPCQ…VRQH), 549 to 571 (YVCE…IRHH), 577 to 599 (HKCS…IIIH), 605 to 628 (YLCD…KTVH), and 708 to 730 (YACD…VRIH). Residue Lys388 forms a Glycyl lysine isopeptide (Lys-Gly) (interchain with G-Cter in ubiquitin) linkage. A Glycyl lysine isopeptide (Lys-Gly) (interchain with G-Cter in ubiquitin) cross-link involves residue Lys472. Residues 628 to 709 (HQGKAGIKIL…EDPNTHILYA (82 aa)) are interaction with MYC. Residues 628-794 (HQGKAGIKIL…TAPDCLPPAE (167 aa)) are interaction with HCFC1. A disordered region spans residues 769-794 (PRDGTEGQPTLAESPPTAPDCLPPAE). Pro residues predominate over residues 784 to 794 (PTAPDCLPPAE).

The protein belongs to the krueppel C2H2-type zinc-finger protein family. As to quaternary structure, homooligomerizes (via the BTB/POZ domain), multimerization is required for DNA binding. Binds to the C-terminal helix-loop-helix motif of MYC which inhibits ZBTB17 transactivation and growth arrest activities and renders it insoluble in the nucleus. Also interacts with HCFC1, MAGEA4 and TMPRSS11A. Interacts (via the C-terminal zinc fingers) with GFI1; the interaction results in the recruitment of MYC to the CDKN1A/p21 and CDKN1B promoters and repression of transcription. Interacts with TRAF2, interfering with the binding of UBC13 to TRAF2, and inhibiting TRAF2 E3 ligase activity. Interacts with BCL6; the interaction inhibits ZBTB17 transactivation activity on target genes involved in cell cycle arrest. Interacts with ZBTB49; this interaction blocks ZBTB17-mediated repression of RB1. In terms of processing, undergoes 'Lys-48'-linked polyubiquitination at Lys-388 and Lys-472 and subsequent proteasomal degradation in a TRAF2-dependent manner and upon TNFA stimulation. In terms of tissue distribution, found in all the embryonic and adult tissues examined.

The protein resides in the nucleus. In terms of biological role, transcription factor that can function as an activator or repressor depending on its binding partners, and by targeting negative regulators of cell cycle progression. Has been shown to bind to the promoters of adenovirus major late protein and cyclin D1 and activate transcription. Required for early embryonic development during gastrulation. Plays a critical role in early lymphocyte development, where it is essential to prevent apoptosis in lymphoid precursors, allowing them to survive in response to IL7 and undergo proper lineage commitment. Represses RB1 transcription; this repression can be blocked by interaction with ZBTB49. The sequence is that of Zinc finger and BTB domain-containing protein 17 (Zbtb17) from Mus musculus (Mouse).